A 338-amino-acid polypeptide reads, in one-letter code: Fructose-1,6-bisphosphatase 1 (338 aa).

Residue T2 is modified to N-acetylthreonine. AMP-binding positions include 18 to 22 (VMEEG) and 28 to 32 (TGEMT). Mg(2+) is bound by residues D69 and E98. 113–114 (KY) provides a ligand contact to AMP. Mg(2+) is bound by residues D119, L121, and D122. 122–125 (DGSS) contacts substrate. R141 provides a ligand contact to AMP. K151 is subject to N6-succinyllysine. S208 is modified (phosphoserine; by PKA). Substrate-binding positions include 213–216 (NEGY), 244–249 (RYVGSM), Y265, and 275–277 (KLR). A phosphotyrosine mark is found at Y216, Y245, and Y265. E281 contacts Mg(2+).

Belongs to the FBPase class 1 family. Homotetramer. Mg(2+) is required as a cofactor.

The enzyme catalyses beta-D-fructose 1,6-bisphosphate + H2O = beta-D-fructose 6-phosphate + phosphate. It functions in the pathway carbohydrate biosynthesis; gluconeogenesis. Subject to complex allosteric regulation. The enzyme can assume an active R-state, or an inactive T-state. Intermediate conformations may exist. AMP acts as an allosteric inhibitor. AMP binding affects the turnover of bound substrate and not the affinity for substrate. Fructose 2,6-bisphosphate acts as a competitive inhibitor. Fructose 2,6-bisphosphate and AMP have synergistic effects. Functionally, catalyzes the hydrolysis of fructose 1,6-bisphosphate to fructose 6-phosphate in the presence of divalent cations, acting as a rate-limiting enzyme in gluconeogenesis. Plays a role in regulating glucose sensing and insulin secretion of pancreatic beta-cells. Appears to modulate glycerol gluconeogenesis in liver. Important regulator of appetite and adiposity; increased expression of the protein in liver after nutrient excess increases circulating satiety hormones and reduces appetite-stimulating neuropeptides and thus seems to provide a feedback mechanism to limit weight gain. This is Fructose-1,6-bisphosphatase 1 (FBP1) from Sus scrofa (Pig).